Consider the following 484-residue polypeptide: Chromosomal replication initiator protein DnaA (484 aa).

The domain I, interacts with DnaA modulators stretch occupies residues 1–74 (MEKSKNIWSL…ILTKNGYNNV (74 aa)). The segment at 74 to 139 (VTIVFTNQPP…EEEPTNFKNP (66 aa)) is domain II. The interval 140-356 (FLKKRYTFEN…AAVTKLKAYI (217 aa)) is domain III, AAA+ region. ATP is bound by residues Gly184, Gly186, Lys187, and Thr188. The interval 357–484 (DLDNIEIDID…TELMNKIKKN (128 aa)) is domain IV, binds dsDNA.

Belongs to the DnaA family. Oligomerizes as a right-handed, spiral filament on DNA at oriC.

The protein resides in the cytoplasm. Functionally, plays an essential role in the initiation and regulation of chromosomal replication. ATP-DnaA binds to the origin of replication (oriC) to initiate formation of the DNA replication initiation complex once per cell cycle. Binds the DnaA box (a 9 base pair repeat at the origin) and separates the double-stranded (ds)DNA. Forms a right-handed helical filament on oriC DNA; dsDNA binds to the exterior of the filament while single-stranded (ss)DNA is stabiized in the filament's interior. The ATP-DnaA-oriC complex binds and stabilizes one strand of the AT-rich DNA unwinding element (DUE), permitting loading of DNA polymerase. After initiation quickly degrades to an ADP-DnaA complex that is not apt for DNA replication. Binds acidic phospholipids. The chain is Chromosomal replication initiator protein DnaA from Borrelia garinii subsp. bavariensis (strain ATCC BAA-2496 / DSM 23469 / PBi) (Borreliella bavariensis).